A 325-amino-acid chain; its full sequence is MIARIWSGESPLWRLLLPLSWLYGLVSGAIRLSYKLGLKRAWRAPVPVVVVGNLTAGGNGKTPVVIWLVEKLQQRGVRVGVVSRGYGGKAAAYPLLLTPETTTAEAGDEPVLIYQRTGAPVAVAPERAAAVKAILAAHNVQIIITDDGLQHYRLARDIEIVVIDGVRRFGNGWWLPAGPMRERASRLKTVDAAIVNGGVARAGEIPMQLAPGLAVNLRTGARCDVAQLSNIVAMAGIGHPPRFFATLEACGAHPQKCVPLADHQTLAPADVQALVGEGQTLVMTEKDAVKCRAFAEDNWWFLPVDARLSGEQPDKLLQHITSLVR.

55–62 (TAGGNGKT) provides a ligand contact to ATP.

The protein belongs to the LpxK family.

It catalyses the reaction a lipid A disaccharide + ATP = a lipid IVA + ADP + H(+). It participates in glycolipid biosynthesis; lipid IV(A) biosynthesis; lipid IV(A) from (3R)-3-hydroxytetradecanoyl-[acyl-carrier-protein] and UDP-N-acetyl-alpha-D-glucosamine: step 6/6. In terms of biological role, transfers the gamma-phosphate of ATP to the 4'-position of a tetraacyldisaccharide 1-phosphate intermediate (termed DS-1-P) to form tetraacyldisaccharide 1,4'-bis-phosphate (lipid IVA). This chain is Tetraacyldisaccharide 4'-kinase, found in Salmonella dublin (strain CT_02021853).